A 195-amino-acid chain; its full sequence is Large ribosomal subunit protein bL32m (195 aa).

4 residues coordinate Zn(2+): Cys-95, Cys-98, Cys-108, and Cys-111.

Belongs to the bacterial ribosomal protein bL32 family. Component of the mitochondrial large ribosomal subunit (mt-LSU).

It localises to the mitochondrion. Component of the mitochondrial large ribosomal subunit (mt-LSU). The mitochondrial ribosome (mitoribosome) is a large ribonucleoprotein complex responsible for the synthesis of proteins inside mitochondria. This is Large ribosomal subunit protein bL32m (mRpL32) from Drosophila melanogaster (Fruit fly).